The primary structure comprises 155 residues: Non-secretory ribonuclease (155 aa).

Residues 1 to 25 form the signal peptide; that stretch reads MGPKLLESRLCLLLLLGLVLMLASC. Residue Lys-33 coordinates substrate. The active-site Proton acceptor is His-38. N-linked (GlcNAc...) asparagine glycosylation occurs at Asn-41. 4 disulfide bridges follow: Cys-47/Cys-106, Cys-61/Cys-118, Cys-79/Cys-133, and Cys-86/Cys-94. Residue Tyr-57 is modified to 3'-nitrotyrosine. 62-66 provides a ligand contact to substrate; that stretch reads KDINT. 3 N-linked (GlcNAc...) asparagine glycosylation sites follow: Asn-83, Asn-88, and Asn-107. His-150 serves as the catalytic Proton donor.

The protein belongs to the pancreatic ribonuclease family. As to quaternary structure, interacts with and forms a tight 1:1 complex with RNH1. Dimerization of two such complexes may occur.

The protein localises to the lysosome. It localises to the cytoplasmic granule. It carries out the reaction an [RNA] containing cytidine + H2O = an [RNA]-3'-cytidine-3'-phosphate + a 5'-hydroxy-ribonucleotide-3'-[RNA].. The enzyme catalyses an [RNA] containing uridine + H2O = an [RNA]-3'-uridine-3'-phosphate + a 5'-hydroxy-ribonucleotide-3'-[RNA].. Functionally, this is a non-secretory ribonuclease. It is a pyrimidine specific nuclease with a slight preference for U. Cytotoxin and helminthotoxin. Possesses a wide variety of biological activities. The polypeptide is Non-secretory ribonuclease (Rnase2) (Mus musculus (Mouse)).